A 1207-amino-acid polypeptide reads, in one-letter code: DNA-directed RNA polymerase subunit beta' (1207 aa).

Zn(2+) is bound by residues Cys60, Cys62, Cys75, and Cys78. Positions 450, 452, and 454 each coordinate Mg(2+). Residues Cys819, Cys893, Cys900, and Cys903 each contribute to the Zn(2+) site.

It belongs to the RNA polymerase beta' chain family. As to quaternary structure, the RNAP catalytic core consists of 2 alpha, 1 beta, 1 beta' and 1 omega subunit. When a sigma factor is associated with the core the holoenzyme is formed, which can initiate transcription. Mg(2+) is required as a cofactor. Zn(2+) serves as cofactor.

It carries out the reaction RNA(n) + a ribonucleoside 5'-triphosphate = RNA(n+1) + diphosphate. In terms of biological role, DNA-dependent RNA polymerase catalyzes the transcription of DNA into RNA using the four ribonucleoside triphosphates as substrates. This chain is DNA-directed RNA polymerase subunit beta', found in Streptococcus pyogenes serotype M12 (strain MGAS2096).